A 210-amino-acid chain; its full sequence is Probable GTP-binding protein EngB (210 aa).

The 175-residue stretch at 25–199 (TGIEVAFAGR…RQKLDTWFSE (175 aa)) folds into the EngB-type G domain. Residues 33 to 40 (GRSNAGKS), 60 to 64 (GRTQL), 78 to 81 (DLPG), 145 to 148 (TKAD), and 178 to 180 (FSS) each bind GTP. Residues Ser40 and Thr62 each coordinate Mg(2+).

Belongs to the TRAFAC class TrmE-Era-EngA-EngB-Septin-like GTPase superfamily. EngB GTPase family. Requires Mg(2+) as cofactor.

In terms of biological role, necessary for normal cell division and for the maintenance of normal septation. The polypeptide is Probable GTP-binding protein EngB (Shigella boydii serotype 4 (strain Sb227)).